The chain runs to 151 residues: Small ribosomal subunit protein uS15 (151 aa).

It belongs to the universal ribosomal protein uS15 family. Component of the small ribosomal subunit.

It is found in the cytoplasm. Functionally, component of the small ribosomal subunit. The ribosome is a large ribonucleoprotein complex responsible for the synthesis of proteins in the cell. This Gillichthys mirabilis (Long-jawed mudsucker) protein is Small ribosomal subunit protein uS15 (rps13).